Reading from the N-terminus, the 113-residue chain is UPF0122 protein LSEI_1603 (113 aa).

The protein belongs to the UPF0122 family.

Functionally, might take part in the signal recognition particle (SRP) pathway. This is inferred from the conservation of its genetic proximity to ftsY/ffh. May be a regulatory protein. This is UPF0122 protein LSEI_1603 from Lacticaseibacillus paracasei (strain ATCC 334 / BCRC 17002 / CCUG 31169 / CIP 107868 / KCTC 3260 / NRRL B-441) (Lactobacillus paracasei).